A 752-amino-acid polypeptide reads, in one-letter code: MAEPQAESEPLLGGARGGGGDWPAGLTTYRSIQVGPGAAARWDLCIDQAVVFIEDAIQYRSINHRVDASSMWLYRRYYSNVCQRTLSFTIFLILFLAFIETPSSLTSTADVRYRAAPWEPPCGLTESVEVLCLLVFAADLSVKGYLFGWAHFQKNLWLLGYLVVLVVSLVDWTVSLSLVCHEPLRIRRLLRPFFLLQNSSMMKKTLKCIRWSLPEMASVGLLLAIHLCLFTMFGMLLFAGGKQDDGQDRERLTYFQNLPESLTSLLVLLTTANNPDVMIPAYSKNRAYAIFFIVFTVIGSLFLMNLLTAIIYSQFRGYLMKSLQTSLFRRRLGTRAAFEVLSSMVGEGGAFPQAVGVKPQNLLQVLQKVQLDSSHKQAMMEKVRSYGSVLLSAEEFQKLFNELDRSVVKEHPPRPEYQSPFLQSAQFLFGHYYFDYLGNLIALANLVSICVFLVLDADVLPAERDDFILGILNCVFIVYYLLEMLLKVFALGLRGYLSYPSNVFDGLLTVVLLVLEISTLAVYRLPHPGWRPEMVGLLSLWDMTRMLNMLIVFRFLRIIPSMKLMAVVASTVLGLVQNMRAFGGILVVVYYVFAIIGINLFRGVIVALPGNSSLAPANGSAPCGSFEQLEYWANNFDDFAAALVTLWNLMVVNNWQVFLDAYRRYSGPWSKIYFVLWWLVSSVIWVNLFLALILENFLHKWDPRSHLQPLAGTPEATYQMTVELLFRDILEEPGEDELTERLSQHPHLWLCR.

Residues 1 to 84 are Cytoplasmic-facing; sequence MAEPQAESEP…RRYYSNVCQR (84 aa). The helical transmembrane segment at 85–105 threads the bilayer; it reads TLSFTIFLILFLAFIETPSSL. Over 106–127 the chain is Extracellular; it reads TSTADVRYRAAPWEPPCGLTES. A helical transmembrane segment spans residues 128-148; the sequence is VEVLCLLVFAADLSVKGYLFG. Topologically, residues 149-155 are cytoplasmic; the sequence is WAHFQKN. A helical transmembrane segment spans residues 156–176; sequence LWLLGYLVVLVVSLVDWTVSL. The Extracellular segment spans residues 177–183; the sequence is SLVCHEP. The chain crosses the membrane as a helical span at residues 184–204; that stretch reads LRIRRLLRPFFLLQNSSMMKK. Positions 203-207 are interaction with phosphatidylinositol 3,5-bisphosphate; that stretch reads KKTLK. The Cytoplasmic portion of the chain corresponds to 205–218; the sequence is TLKCIRWSLPEMAS. Residues 219 to 239 form a helical membrane-spanning segment; the sequence is VGLLLAIHLCLFTMFGMLLFA. The Extracellular portion of the chain corresponds to 240-254; the sequence is GGKQDDGQDRERLTY. Positions 255–279 form an intramembrane region, helical; Pore-forming; it reads FQNLPESLTSLLVLLTTANNPDVMI. At 280–289 the chain is on the extracellular side; the sequence is PAYSKNRAYA. The chain crosses the membrane as a helical span at residues 290–310; the sequence is IFFIVFTVIGSLFLMNLLTAI. At 311-436 the chain is on the cytoplasmic side; the sequence is IYSQFRGYLM…FLFGHYYFDY (126 aa). Residues 437-459 traverse the membrane as a helical segment; it reads LGNLIALANLVSICVFLVLDADV. Over 460-465 the chain is Extracellular; the sequence is LPAERD. Residues 466–486 traverse the membrane as a helical segment; the sequence is DFILGILNCVFIVYYLLEMLL. Over 487–502 the chain is Cytoplasmic; the sequence is KVFALGLRGYLSYPSN. A helical membrane pass occupies residues 503–523; sequence VFDGLLTVVLLVLEISTLAVY. The Extracellular segment spans residues 524–554; the sequence is RLPHPGWRPEMVGLLSLWDMTRMLNMLIVFR. The chain crosses the membrane as a helical span at residues 555-575; it reads FLRIIPSMKLMAVVASTVLGL. Over 576–580 the chain is Cytoplasmic; it reads VQNMR. Residues 581 to 601 traverse the membrane as a helical segment; that stretch reads AFGGILVVVYYVFAIIGINLF. The Extracellular segment spans residues 602–635; sequence RGVIVALPGNSSLAPANGSAPCGSFEQLEYWANN. N611 and N618 each carry an N-linked (GlcNAc...) asparagine glycan. An intramembrane region (helical; Pore-forming) is located at residues 636–658; sequence FDDFAAALVTLWNLMVVNNWQVF. At 659–673 the chain is on the extracellular side; that stretch reads LDAYRRYSGPWSKIY. A helical transmembrane segment spans residues 674–694; sequence FVLWWLVSSVIWVNLFLALIL. Residues 695–752 lie on the Cytoplasmic side of the membrane; the sequence is ENFLHKWDPRSHLQPLAGTPEATYQMTVELLFRDILEEPGEDELTERLSQHPHLWLCR.

The protein belongs to the calcium channel alpha-1 subunit (TC 1.A.1.11) family. Two pore calcium channel subfamily. In terms of assembly, homodimer. Interacts with LRRK2. Interacts with HAX1. Interacts with MTOR; the interaction is required for TPCN2 ATP sensitivity. Found in a complex with LSM12, TPCN1 and TPCN2. Interacts with LSM12. In terms of processing, N-glycosylated. Widely expressed. Expressed at high level in liver and kidney.

It localises to the late endosome membrane. The protein resides in the lysosome membrane. The protein localises to the melanosome membrane. It catalyses the reaction Na(+)(in) = Na(+)(out). The enzyme catalyses Ca(2+)(in) = Ca(2+)(out). With respect to regulation, regulated by Mg(2+) ions, cytosolic Mg(2+) selectively inhibits outward current while lysosomal Mg(2+) modestly inhibits both the outward and inward currents. In the absence of Mg(2+), NAADP readily activates TPCN2, with properties similar to PI(3,5)P2. Na(+) current is inhibited by ATP in a MTORC-dependent manner. ATP sensitivity is independent of PI(3,5)P2. Both current elicited by PI(3,5)P2 as well as NAADP are inhibited by tetrandrine. In terms of biological role, intracellular channel initially characterized as a non-selective Ca(2+)-permeable channel activated by NAADP (nicotinic acid adenine dinucleotide phosphate), it is also a highly-selective Na(+) channel activated directly by PI(3,5)P2 (phosphatidylinositol 3,5-bisphosphate). Localizes to the lysosomal and late endosome membranes where it regulates organellar membrane excitability, membrane trafficking, and pH homeostasis. Is associated with a plethora of physiological processes, including mTOR-dependent nutrient sensing, skin pigmentation and autophagy. Ion selectivity is not fixed but rather agonist-dependent and under defined ionic conditions, can be readily activated by both NAADP and PI(3,5)P2. As calcium channel, it increases the pH in the lysosomal lumen, as sodium channel, it promotes lysosomal exocytosis. Plays a crucial role in endolysosomal trafficking in the endolysosomal degradation pathway and is potentially involved in the homeostatic control of many macromolecules and cell metabolites. Also expressed in melanosomes of pigmented cells where mediates a Ca(2+) channel and/or PI(3,5)P2-activated melanosomal Na(+) channel to acidify pH and inhibit tyrosinase activity required for melanogenesis and pigmentation. Unlike the voltage-dependent TPCN1, TPCN2 is voltage independent and can be activated solely by PI(3,5)P2 binding. In contrast, PI(4,5)P2, PI(3,4)P2, PI(3)P and PI(5)P have no obvious effect on channel activation. (Microbial infection) During Ebola virus (EBOV) infection, controls the movement of endosomes containing virus particles and is required by EBOV to escape from the endosomal network into the cell cytoplasm. Its function is as follows. (Microbial infection) Required for cell entry of coronaviruses SARS-CoV and SARS-CoV-2, as well as human coronavirus EMC (HCoV-EMC), by endocytosis. This Homo sapiens (Human) protein is Two pore channel protein 2.